A 122-amino-acid chain; its full sequence is UPF0102 protein Gmet_2864 (122 aa).

This sequence belongs to the UPF0102 family.

The sequence is that of UPF0102 protein Gmet_2864 from Geobacter metallireducens (strain ATCC 53774 / DSM 7210 / GS-15).